A 669-amino-acid polypeptide reads, in one-letter code: Exostosin-like 1 (669 aa).

Over Met1–Phe8 the chain is Cytoplasmic. Residues Trp9 to Leu29 form a helical; Signal-anchor for type II membrane protein membrane-spanning segment. Residues Ala30–Pro669 lie on the Lumenal side of the membrane. N-linked (GlcNAc...) asparagine glycans are attached at residues Asn263 and Asn480. A disulfide bridge connects residues Cys577 and Cys627. Residues Arg601 to Gln621 are disordered.

The protein belongs to the glycosyltransferase 47 family.

The protein localises to the endoplasmic reticulum membrane. It catalyses the reaction 3-O-{[(1-&gt;4)-beta-D-GlcA-(1-&gt;4)-alpha-D-GlcNAc](n)-(1-&gt;4)-beta-D-GlcA-(1-&gt;3)-beta-D-Gal-(1-&gt;3)-beta-D-Gal-(1-&gt;4)-beta-D-Xyl}-L-seryl-[protein] + UDP-N-acetyl-alpha-D-glucosamine = 3-O-{alpha-D-GlcNAc-[(1-&gt;4)-beta-D-GlcA-(1-&gt;4)-alpha-D-GlcNAc](n)-(1-&gt;4)-beta-D-GlcA-(1-&gt;3)-beta-D-Gal-(1-&gt;3)-beta-D-Gal-(1-&gt;4)-beta-D-Xyl}-L-seryl-[protein] + UDP + H(+). The protein operates within protein modification; protein glycosylation. Functionally, glycosyltransferase required for the biosynthesis of heparan-sulfate (HS). Transfers N-acetyl-alpha-D-glucosamine to the nascent HS chain (GlcNAcT-II activity). Appears to lack GlcNAcT I and GlcAT-II activities. This is Exostosin-like 1 (Extl1) from Mus musculus (Mouse).